Reading from the N-terminus, the 220-residue chain is Probable L-serine dehydratase, beta chain (220 aa).

Positions 148-220 constitute an ACT domain; it reads AILVVHNDKF…NIIQVTKIAD (73 aa).

Belongs to the iron-sulfur dependent L-serine dehydratase family. Heterodimer of an alpha chain and a beta chain. Requires [4Fe-4S] cluster as cofactor.

The catalysed reaction is L-serine = pyruvate + NH4(+). The protein operates within carbohydrate biosynthesis; gluconeogenesis. The chain is Probable L-serine dehydratase, beta chain (sdaAB) from Bacillus subtilis (strain 168).